Consider the following 240-residue polypeptide: Ornithine decarboxylase antizyme (240 aa).

Disordered regions lie at residues 18 to 45 (RSEP…SSAG) and 69 to 95 (DHDR…SSEF). Residues 21–33 (PISSSNRATKRTI) show a composition bias toward polar residues. Over residues 34 to 43 (SSSSSSSSSS) the composition is skewed to low complexity. Basic and acidic residues predominate over residues 69–84 (DHDRASPLKEYNRKTS). The segment covering 85-95 (IDSTTTASSEF) has biased composition (polar residues).

Belongs to the ODC antizyme family. As to quaternary structure, interacts with ODC1 and thereby sterically blocks ODC homodimerization. In terms of tissue distribution, preferentially expressed in adult female midguts.

In terms of biological role, ornithine decarboxylase (ODC) antizyme protein that negatively regulates ODC activity and intracellular polyamine biosynthesis and uptake in response to increased intracellular polyamine levels. Binds to ODC monomers, inhibiting the assembly of the functional ODC homodimer, and targets the monomers for ubiquitin-independent proteolytic destruction by the 26S proteasome. The polypeptide is Ornithine decarboxylase antizyme (Oda) (Aedes aegypti (Yellowfever mosquito)).